A 150-amino-acid polypeptide reads, in one-letter code: MNNKSLIFLAIKSLDIQNQISLTSNIFNLSFDIQLNQIIIDSQIKSDKDLKSILLKVLNSIGNQSLDSNDLANNYKRRFRYYFSKMSFFRSLEKSIYENNILIDNLGITGLYLLYLIVEKEDVFKLWLYYKNYTFDQLIRLIETKNNFYN.

Its subcellular location is the plastid. The protein localises to the chloroplast. This is an uncharacterized protein from Pyropia yezoensis (Susabi-nori).